The primary structure comprises 406 residues: Phosphopentomutase (406 aa).

Mn(2+)-binding residues include aspartate 10, aspartate 305, histidine 310, aspartate 346, histidine 347, and histidine 358.

Belongs to the phosphopentomutase family. Requires Mn(2+) as cofactor.

It is found in the cytoplasm. It carries out the reaction 2-deoxy-alpha-D-ribose 1-phosphate = 2-deoxy-D-ribose 5-phosphate. The catalysed reaction is alpha-D-ribose 1-phosphate = D-ribose 5-phosphate. The protein operates within carbohydrate degradation; 2-deoxy-D-ribose 1-phosphate degradation; D-glyceraldehyde 3-phosphate and acetaldehyde from 2-deoxy-alpha-D-ribose 1-phosphate: step 1/2. Functionally, isomerase that catalyzes the conversion of deoxy-ribose 1-phosphate (dRib-1-P) and ribose 1-phosphate (Rib-1-P) to deoxy-ribose 5-phosphate (dRib-5-P) and ribose 5-phosphate (Rib-5-P), respectively. This Rhizobium etli (strain ATCC 51251 / DSM 11541 / JCM 21823 / NBRC 15573 / CFN 42) protein is Phosphopentomutase.